The primary structure comprises 152 residues: Transcriptional repressor NrdR (152 aa).

Residues 3–34 fold into a zinc finger; the sequence is CPSCQHNGTRVLDSRPVDDGKSIRRRRECESC. The ATP-cone domain maps to 49–139; the sequence is LIVVKKEGVR…VYRQFKDINV (91 aa).

The protein belongs to the NrdR family. Requires Zn(2+) as cofactor.

Functionally, negatively regulates transcription of bacterial ribonucleotide reductase nrd genes and operons by binding to NrdR-boxes. The protein is Transcriptional repressor NrdR of Bacillus subtilis (strain 168).